Here is a 101-residue protein sequence, read N- to C-terminus: DNA-binding protein Fis (101 aa).

Positions 77 to 96 (QTRAANMLGINRGTLRKKLK) form a DNA-binding region, H-T-H motif.

This sequence belongs to the transcriptional regulatory Fis family. In terms of assembly, homodimer.

In terms of biological role, activates ribosomal RNA transcription. Plays a direct role in upstream activation of rRNA promoters. The protein is DNA-binding protein Fis of Shewanella frigidimarina (strain NCIMB 400).